A 644-amino-acid chain; its full sequence is Arginine--tRNA ligase (644 aa).

Positions 129-139 (ANPIHPLHLGH) match the 'HIGH' region motif.

Belongs to the class-I aminoacyl-tRNA synthetase family.

It localises to the cytoplasm. The enzyme catalyses tRNA(Arg) + L-arginine + ATP = L-arginyl-tRNA(Arg) + AMP + diphosphate. This is Arginine--tRNA ligase (argS) from Aeropyrum pernix (strain ATCC 700893 / DSM 11879 / JCM 9820 / NBRC 100138 / K1).